The following is a 156-amino-acid chain: Small ribosomal subunit protein uS7 (156 aa).

It belongs to the universal ribosomal protein uS7 family. In terms of assembly, part of the 30S ribosomal subunit. Contacts proteins S9 and S11.

Functionally, one of the primary rRNA binding proteins, it binds directly to 16S rRNA where it nucleates assembly of the head domain of the 30S subunit. Is located at the subunit interface close to the decoding center, probably blocks exit of the E-site tRNA. The chain is Small ribosomal subunit protein uS7 from Pectobacterium atrosepticum (strain SCRI 1043 / ATCC BAA-672) (Erwinia carotovora subsp. atroseptica).